Here is a 945-residue protein sequence, read N- to C-terminus: Bifunctional glutamine synthetase adenylyltransferase/adenylyl-removing enzyme (945 aa).

An adenylyl removase region spans residues 1 to 440 (MMPLSPQLQQ…VFNELIGDDE (440 aa)). An adenylyl transferase region spans residues 449 to 945 (AEYWRELWQD…SASWQKWLMA (497 aa)).

The protein belongs to the GlnE family. The cofactor is Mg(2+).

It catalyses the reaction [glutamine synthetase]-O(4)-(5'-adenylyl)-L-tyrosine + phosphate = [glutamine synthetase]-L-tyrosine + ADP. The enzyme catalyses [glutamine synthetase]-L-tyrosine + ATP = [glutamine synthetase]-O(4)-(5'-adenylyl)-L-tyrosine + diphosphate. Functionally, involved in the regulation of glutamine synthetase GlnA, a key enzyme in the process to assimilate ammonia. When cellular nitrogen levels are high, the C-terminal adenylyl transferase (AT) inactivates GlnA by covalent transfer of an adenylyl group from ATP to specific tyrosine residue of GlnA, thus reducing its activity. Conversely, when nitrogen levels are low, the N-terminal adenylyl removase (AR) activates GlnA by removing the adenylyl group by phosphorolysis, increasing its activity. The regulatory region of GlnE binds the signal transduction protein PII (GlnB) which indicates the nitrogen status of the cell. The sequence is that of Bifunctional glutamine synthetase adenylyltransferase/adenylyl-removing enzyme from Klebsiella pneumoniae subsp. pneumoniae (strain ATCC 700721 / MGH 78578).